A 397-amino-acid chain; its full sequence is Protein WRKY1 (397 aa).

The WRKY DNA-binding region spans 326 to 392 (KVADIPADEF…YEGDHNHNRV (67 aa)).

This sequence belongs to the WRKY group II-d family. Interacts with RS2. More abundant in apices and young leaf primordia than in fully expanded leaf tissues.

The protein resides in the nucleus. Transcription factor. Interacts specifically with the W box (5'-(T)TGAC[CT]-3'), a frequently occurring elicitor-responsive cis-acting element. This Zea mays (Maize) protein is Protein WRKY1.